Consider the following 171-residue polypeptide: uncharacterized protein (171 aa).

This is an uncharacterized protein from Thermofilum pendens.